A 161-amino-acid polypeptide reads, in one-letter code: MEYNTSALCDLFADSVDVVEPMFVSFGGRASFGGEITTIKCFEDKGVILKALEKPGLGKVLLIDGGGSMRRALIDSAAAQIALDNGWEGIICYGSVREVDDLEEINVGVHAIASIPVSADDQGVGEVDVAVNFGGVTFLPEDHVYADRTGIILSPEPLDVE.

Belongs to the RraA family. Homotrimer. Binds to both RNA-binding sites in the C-terminal region of Rne and to RhlB.

It is found in the cytoplasm. Functionally, globally modulates RNA abundance by binding to RNase E (Rne) and regulating its endonucleolytic activity. Can modulate Rne action in a substrate-dependent manner by altering the composition of the degradosome. Modulates RNA-binding and helicase activities of the degradosome. The chain is Regulator of ribonuclease activity A from Pseudoalteromonas atlantica (strain T6c / ATCC BAA-1087).